The primary structure comprises 284 residues: METARLLFVHAHPDDETLTTGATIAHYVARGAQVHVITCTLGEEGEVIGDEWAQLAVDRADQLGGYRIGELTAALAELGVDRPRFLGGAGRWRDSGMDGTPARQQQRFVDGDFAEQTATLAAAIDELRPHVVVTYDPNGGYGHPDHIHAHRVTTAAVAASTWQVPKLYWTVTSSSALAAALASMGAVPEEWIRVSADDLPLFGYSDEAIDAALDLTAHESARVAALRAHRTQVSVSPDGRSFALSNNVALPVDPTEYYVLAAGSAGARDERGWETDLLSGLSVG.

Histidine 12, aspartate 15, and histidine 146 together coordinate Zn(2+).

It belongs to the MshB deacetylase family. Requires Zn(2+) as cofactor.

It carries out the reaction 1D-myo-inositol 2-acetamido-2-deoxy-alpha-D-glucopyranoside + H2O = 1D-myo-inositol 2-amino-2-deoxy-alpha-D-glucopyranoside + acetate. Catalyzes the deacetylation of 1D-myo-inositol 2-acetamido-2-deoxy-alpha-D-glucopyranoside (GlcNAc-Ins) in the mycothiol biosynthesis pathway. This is 1D-myo-inositol 2-acetamido-2-deoxy-alpha-D-glucopyranoside deacetylase from Mycolicibacterium vanbaalenii (strain DSM 7251 / JCM 13017 / BCRC 16820 / KCTC 9966 / NRRL B-24157 / PYR-1) (Mycobacterium vanbaalenii).